The primary structure comprises 117 residues: Ig heavy chain V-A2 region K-25 (117 aa).

Pyrrolidone carboxylic acid is present on Q1. Positions 1–106 (QSVKESEGGL…GLSYLKSSVD (106 aa)) constitute an Ig-like domain. A disulfide bond links C21 and C91.

The sequence is that of Ig heavy chain V-A2 region K-25 from Oryctolagus cuniculus (Rabbit).